A 348-amino-acid polypeptide reads, in one-letter code: Organic solute transporter alpha-like protein 3 (348 aa).

The Extracellular segment spans residues 1-49 (MAKEHGAMRSVLNLIGSVMLPQDTSNCSDRHDTPSAPEFLSHLQPFQTV). A glycan (N-linked (GlcNAc...) asparagine) is linked at Asn-26. A helical membrane pass occupies residues 50–70 (LLSIASFSTTIVLCLSLIHWF). Over 71–84 (YVYKYVSIEKRRNK) the chain is Cytoplasmic. Residues 85–105 (LYWLIAVFPVACSCSFIAMCV) form a helical membrane-spanning segment. Topologically, residues 106–109 (PRTA) are extracellular. The helical transmembrane segment at 110–130 (VILTCIGVLYYLMCLFVIVSL) threads the bilayer. Over 131-180 (ARHLFGGRESFSTCLQYDDRPIDFRSPPFCCIIPKLPTARSTEKNIRRLE) the chain is Cytoplasmic. The helical transmembrane segment at 181–201 (WCVLQAPIVRSIIIFLDVVAV) threads the bilayer. The Extracellular segment spans residues 202 to 213 (AEMREDATPYIR). The chain crosses the membrane as a helical span at residues 214-234 (YSDMASLCSLLLAIFGVHTLA). Over 235–240 (RVTSNK) the chain is Cytoplasmic. The helical transmembrane segment at 241–261 (LSAYCFMSMFRLVDISLLFFS) threads the bilayer. Residues 262-291 (AQQPMIFQNVLLRFNLISCGPLLNAQENAY) lie on the Extracellular side of the membrane. Residues 292–312 (FVCNFIITCEMLLLSVLATWL) form a helical membrane-spanning segment. Residues 313–348 (LAPRHNAMFDAYRPSMALSETTASLNETEQSMILDH) are Cytoplasmic-facing.

The protein belongs to the OST-alpha family.

Its subcellular location is the cell membrane. Its function is as follows. Probable transporter. This is Organic solute transporter alpha-like protein 3 (osta-3) from Caenorhabditis elegans.